Reading from the N-terminus, the 216-residue chain is Phosphoserine phosphatase (216 aa).

Catalysis depends on Asp-10, which acts as the Nucleophile. Mg(2+) contacts are provided by Asp-10 and Asp-12. Residue Asp-12 is the Proton donor of the active site. Substrate contacts are provided by residues Glu-19, Arg-55, 98 to 99 (SG), and Lys-143. Asp-166 provides a ligand contact to Mg(2+). Asn-169 is a substrate binding site.

It belongs to the HAD-like hydrolase superfamily. SerB family. It depends on Mg(2+) as a cofactor.

It carries out the reaction O-phospho-L-serine + H2O = L-serine + phosphate. The catalysed reaction is O-phospho-D-serine + H2O = D-serine + phosphate. It functions in the pathway amino-acid biosynthesis; L-serine biosynthesis; L-serine from 3-phospho-D-glycerate: step 3/3. This Lactococcus lactis subsp. lactis (strain IL1403) (Streptococcus lactis) protein is Phosphoserine phosphatase.